The chain runs to 88 residues: Large ribosomal subunit protein bL27 (88 aa).

Positions 1 to 13 (MATKKGASSSSNG) are enriched in polar residues. The segment at 1–23 (MATKKGASSSSNGRDSEAKRLGV) is disordered.

The protein belongs to the bacterial ribosomal protein bL27 family.

The chain is Large ribosomal subunit protein bL27 from Corynebacterium urealyticum (strain ATCC 43042 / DSM 7109).